Reading from the N-terminus, the 483-residue chain is Protein nucleotidyltransferase YdiU (483 aa).

ATP is bound by residues Gly81, Gly83, Arg84, Lys103, Asp115, Gly116, Arg166, and Arg173. Residue Asp244 is the Proton acceptor of the active site. Residues Asn245 and Asp254 each contribute to the Mg(2+) site. Asp254 provides a ligand contact to ATP.

It belongs to the SELO family. It depends on Mg(2+) as a cofactor. Mn(2+) is required as a cofactor.

It catalyses the reaction L-seryl-[protein] + ATP = 3-O-(5'-adenylyl)-L-seryl-[protein] + diphosphate. The enzyme catalyses L-threonyl-[protein] + ATP = 3-O-(5'-adenylyl)-L-threonyl-[protein] + diphosphate. The catalysed reaction is L-tyrosyl-[protein] + ATP = O-(5'-adenylyl)-L-tyrosyl-[protein] + diphosphate. It carries out the reaction L-histidyl-[protein] + UTP = N(tele)-(5'-uridylyl)-L-histidyl-[protein] + diphosphate. It catalyses the reaction L-seryl-[protein] + UTP = O-(5'-uridylyl)-L-seryl-[protein] + diphosphate. The enzyme catalyses L-tyrosyl-[protein] + UTP = O-(5'-uridylyl)-L-tyrosyl-[protein] + diphosphate. In terms of biological role, nucleotidyltransferase involved in the post-translational modification of proteins. It can catalyze the addition of adenosine monophosphate (AMP) or uridine monophosphate (UMP) to a protein, resulting in modifications known as AMPylation and UMPylation. This chain is Protein nucleotidyltransferase YdiU, found in Shewanella pealeana (strain ATCC 700345 / ANG-SQ1).